The chain runs to 403 residues: Indoleamine 2,3-dioxygenase 1 (403 aa).

His346 contributes to the heme b binding site. A disordered region spans residues 360-381; that stretch reads QQPKENKTSEDPSKLEAKGTGG. Over residues 363 to 376 the composition is skewed to basic and acidic residues; the sequence is KENKTSEDPSKLEA.

Belongs to the indoleamine 2,3-dioxygenase family. As to quaternary structure, monomer. It depends on heme b as a cofactor. Expressed in mature dendritic cells located in lymphoid organs (including lymph nodes, spleen, tonsils, Peyers's patches, the gut lamina propria, and the thymic medulla), in some epithelial cells of the female genital tract, as well as in endothelial cells of term placenta and in lung parenchyma. Weakly or not expressed in most normal tissues, but mostly inducible in most tissues. Expressed in more than 50% of tumors, either by tumoral, stromal, or endothelial cells (expression in tumor is associated with a worse clinical outcome). Not overexpressed in tumor-draining lymph nodes.

It localises to the cytoplasm. The protein localises to the cytosol. The enzyme catalyses D-tryptophan + O2 = N-formyl-D-kynurenine. The catalysed reaction is L-tryptophan + O2 = N-formyl-L-kynurenine. It participates in amino-acid degradation; L-tryptophan degradation via kynurenine pathway; L-kynurenine from L-tryptophan: step 1/2. Its activity is regulated as follows. Activity is inhibited by and MTH-trp (methylthiohydantoin-DL-tryptophan), modestly inhibited by L-1MT (1-methyl-L-tryptophan) but not D-1MT (1-methyl-D-tryptophan). Catalyzes the first and rate limiting step of the catabolism of the essential amino acid tryptophan along the kynurenine pathway. Involved in the peripheral immune tolerance, contributing to maintain homeostasis by preventing autoimmunity or immunopathology that would result from uncontrolled and overreacting immune responses. Tryptophan shortage inhibits T lymphocytes division and accumulation of tryptophan catabolites induces T-cell apoptosis and differentiation of regulatory T-cells. Acts as a suppressor of anti-tumor immunity. Limits the growth of intracellular pathogens by depriving tryptophan. Protects the fetus from maternal immune rejection. This Homo sapiens (Human) protein is Indoleamine 2,3-dioxygenase 1.